Consider the following 381-residue polypeptide: MWLKIYLLSILAISVFTFVFLFGALPQFEDTAVWKFRKWLSNRPAAIRSWDSKYCGGRLSVVGDFCGSVVAPAAPWSVPILYCAFTTYMFSAYYEDLHPFIAENHWYYAWLAPVAYTILVVSFVLATFSDPGKITKQNHALLLNQFRFDNLMFLEDTECSTCKFTKPARSKHDRFTNKCVAKFDHYCLWINNTVGLYNYRWFLFFLLGNVWTLCWGALLAGLKMIVMVAAEYKDHPKPLPSIFSQWWQVMITNENKRVGIIFLLSVSTGALACAFTAMHFYYIYLGATTNETDKWGDIHAAISEGSVWMFQKPGFKLDRSILLQKDEEGRPNRSLTAEEREYVAQNGLALTLLTDHKPIVNIYDKGFLNNLKAVMFPNSAY.

Residues 1 to 4 (MWLK) lie on the Lumenal side of the membrane. The chain crosses the membrane as a helical span at residues 5-25 (IYLLSILAISVFTFVFLFGAL). The Cytoplasmic segment spans residues 26–64 (PQFEDTAVWKFRKWLSNRPAAIRSWDSKYCGGRLSVVGD). The helical transmembrane segment at 65–85 (FCGSVVAPAAPWSVPILYCAF) threads the bilayer. Residues 86-107 (TTYMFSAYYEDLHPFIAENHWY) lie on the Lumenal side of the membrane. A helical membrane pass occupies residues 108–128 (YAWLAPVAYTILVVSFVLATF). Residues 129–201 (SDPGKITKQN…NTVGLYNYRW (73 aa)) are Cytoplasmic-facing. Positions 157–207 (TECSTCKFTKPARSKHDRFTNKCVAKFDHYCLWINNTVGLYNYRWFLFFLL) constitute a DHHC domain. The S-palmitoyl cysteine intermediate role is filled by Cys-187. A helical transmembrane segment spans residues 202–222 (FLFFLLGNVWTLCWGALLAGL). Residues 223-257 (KMIVMVAAEYKDHPKPLPSIFSQWWQVMITNENKR) are Lumenal-facing. A helical membrane pass occupies residues 258 to 278 (VGIIFLLSVSTGALACAFTAM). The Cytoplasmic portion of the chain corresponds to 279 to 381 (HFYYIYLGAT…KAVMFPNSAY (103 aa)).

The protein belongs to the DHHC palmitoyltransferase family. SWF1 subfamily.

Its subcellular location is the endoplasmic reticulum membrane. It carries out the reaction L-cysteinyl-[protein] + hexadecanoyl-CoA = S-hexadecanoyl-L-cysteinyl-[protein] + CoA. Functionally, palmitoyltransferase that targets several endosomal SNAREs. Palmitoylates the SNAREs at cysteine residues close to the cytoplasmic end of their transmembrane domain. May have a role in the cellular quality control of transmembrane domain-containing proteins. The polypeptide is Palmitoyltransferase SWF1 (SWF1) (Yarrowia lipolytica (strain CLIB 122 / E 150) (Yeast)).